The primary structure comprises 350 residues: Glutamyl-tRNA reductase (350 aa).

Substrate contacts are provided by residues 53 to 56, S105, 110 to 112, and Q116; these read TCNR and ETQ. C54 (nucleophile) is an active-site residue. Residue 185–190 coordinates NADP(+); it reads GAGETA.

Belongs to the glutamyl-tRNA reductase family. Homodimer.

The enzyme catalyses (S)-4-amino-5-oxopentanoate + tRNA(Glu) + NADP(+) = L-glutamyl-tRNA(Glu) + NADPH + H(+). It functions in the pathway porphyrin-containing compound metabolism; protoporphyrin-IX biosynthesis; 5-aminolevulinate from L-glutamyl-tRNA(Glu): step 1/2. Catalyzes the NADPH-dependent reduction of glutamyl-tRNA(Glu) to glutamate 1-semialdehyde (GSA). The sequence is that of Glutamyl-tRNA reductase from Deinococcus radiodurans (strain ATCC 13939 / DSM 20539 / JCM 16871 / CCUG 27074 / LMG 4051 / NBRC 15346 / NCIMB 9279 / VKM B-1422 / R1).